A 152-amino-acid chain; its full sequence is ARL14 effector protein-like (152 aa).

Residues 1 to 16 (MTEPSQKNNSTQQELT) are compositionally biased toward polar residues. A disordered region spans residues 1–27 (MTEPSQKNNSTQQELTNHLFPEKSSQI).

This chain is ARL14 effector protein-like (Arl14epl), found in Mus musculus (Mouse).